A 357-amino-acid chain; its full sequence is Endo-1,4-beta-xylanase Xyn11B (357 aa).

A signal peptide spans 1–27; the sequence is MKIFQNTKNVIVSIAWAAALCTSAVSA. In terms of domain architecture, GH11 spans 29-226; sequence TLTSNSTGTN…SRGSSDITVS (198 aa). Glutamate 116 (nucleophile) is an active-site residue. Glutamate 213 functions as the Proton donor in the catalytic mechanism. The interval 220–245 is disordered; it reads SSDITVSQGGSSGGGNSSSSSSASGG.

This sequence belongs to the glycosyl hydrolase 11 (cellulase G) family.

It localises to the secreted. The enzyme catalyses Endohydrolysis of (1-&gt;4)-beta-D-xylosidic linkages in xylans.. Its pathway is glycan degradation; xylan degradation. Functionally, endo-acting xylanase which specifically cleaves internal linkages on the xylan backbone, releasing xylooligosaccharides. Is able to hydrolyze glucuronoxylan and the arabinoxylan from wheat. In Cellvibrio japonicus (Pseudomonas fluorescens subsp. cellulosa), this protein is Endo-1,4-beta-xylanase Xyn11B (xyn11B).